The chain runs to 388 residues: Zinc finger protein 1 (388 aa).

Residues 1 to 19 (MSSIPNINWNDPNNGKSNT) are compositionally biased toward polar residues. Disordered regions lie at residues 1–120 (MSSI…QQPL), 157–219 (LQQR…QQWD), and 236–311 (SSIQ…KPIT). Positions 20 to 38 (SRQSQPQPQLPSNVSPPNS) are enriched in low complexity. Composition is skewed to polar residues over residues 52–67 (YGSSQFSNEYSRNPNT) and 88–97 (YPVQQTAQQR). Low complexity-rich tracts occupy residues 102-120 (LQQVHSQQQQQQQQQQQPL) and 157-172 (LQQRQQAQGQQLKSQL). Over residues 173-203 (NEQNAMMSASTQQYPVQDFTNPYPNAQNPAE) the composition is skewed to polar residues. Composition is skewed to low complexity over residues 204–217 (QQQQQQPLRTQSQQ) and 236–259 (SSIQQQIPPQNLSPSEQQQVKQQQ). The span at 268–278 (KKKPGRKPKLR) shows a compositional bias: basic residues. Residues 282–294 (ESSSETPQVPKTA) are compositionally biased toward polar residues. Positions 318 to 345 (CLTCRQRKKRCCETRPRCTECTRLRLNC) form a DNA-binding region, zn(2)-C6 fungal-type. Residues 348 to 367 (PKPGTEHKNKPKDQKDDENT) form a disordered region. The segment covering 351 to 367 (GTEHKNKPKDQKDDENT) has biased composition (basic and acidic residues).

Its subcellular location is the nucleus. Its function is as follows. Perhaps a regulatory role. May be involved in transcriptional activation. The protein is Zinc finger protein 1 (CZF1) of Candida albicans (strain WO-1) (Yeast).